The following is a 447-amino-acid chain: Phosphoglucosamine mutase (447 aa).

Residue Ser-102 is the Phosphoserine intermediate of the active site. 4 residues coordinate Mg(2+): Ser-102, Asp-241, Asp-243, and Asp-245. Ser-102 is subject to Phosphoserine.

It belongs to the phosphohexose mutase family. Mg(2+) is required as a cofactor. In terms of processing, activated by phosphorylation.

It carries out the reaction alpha-D-glucosamine 1-phosphate = D-glucosamine 6-phosphate. Functionally, catalyzes the conversion of glucosamine-6-phosphate to glucosamine-1-phosphate. This chain is Phosphoglucosamine mutase, found in Pseudomonas savastanoi pv. phaseolicola (strain 1448A / Race 6) (Pseudomonas syringae pv. phaseolicola (strain 1448A / Race 6)).